A 550-amino-acid chain; its full sequence is Hydroxylamine reductase (550 aa).

The [2Fe-2S] cluster site is built by cysteine 3, cysteine 6, cysteine 18, and cysteine 25. Residues histidine 249, glutamate 273, cysteine 317, cysteine 405, cysteine 433, cysteine 458, glutamate 492, and lysine 494 each coordinate hybrid [4Fe-2O-2S] cluster. Cysteine 405 bears the Cysteine persulfide mark.

The protein belongs to the HCP family. It depends on [2Fe-2S] cluster as a cofactor. Requires hybrid [4Fe-2O-2S] cluster as cofactor.

Its subcellular location is the cytoplasm. The enzyme catalyses A + NH4(+) + H2O = hydroxylamine + AH2 + H(+). Its function is as follows. Catalyzes the reduction of hydroxylamine to form NH(3) and H(2)O. This chain is Hydroxylamine reductase, found in Escherichia coli O6:K15:H31 (strain 536 / UPEC).